Here is a 351-residue protein sequence, read N- to C-terminus: GTPase Obg (351 aa).

The region spanning 1 to 159 (MKFLDQCKIY…RWVWLRLKLI (159 aa)) is the Obg domain. One can recognise an OBG-type G domain in the interval 160 to 327 (ADAGLVGLPN…MLFELLRHIR (168 aa)). GTP is bound by residues 166–173 (GLPNAGKS), 191–195 (FTTLT), 212–215 (DIPG), 279–282 (NKID), and 308–310 (SGA). Mg(2+)-binding residues include Ser-173 and Thr-193.

Belongs to the TRAFAC class OBG-HflX-like GTPase superfamily. OBG GTPase family. As to quaternary structure, monomer. Requires Mg(2+) as cofactor.

The protein localises to the cytoplasm. Its function is as follows. An essential GTPase which binds GTP, GDP and possibly (p)ppGpp with moderate affinity, with high nucleotide exchange rates and a fairly low GTP hydrolysis rate. Plays a role in control of the cell cycle, stress response, ribosome biogenesis and in those bacteria that undergo differentiation, in morphogenesis control. In Rhodospirillum centenum (strain ATCC 51521 / SW), this protein is GTPase Obg.